The primary structure comprises 344 residues: Tetraacyldisaccharide 4'-kinase (344 aa).

65–72 (HAGGTGKT) is a binding site for ATP.

It belongs to the LpxK family.

It catalyses the reaction a lipid A disaccharide + ATP = a lipid IVA + ADP + H(+). Its pathway is glycolipid biosynthesis; lipid IV(A) biosynthesis; lipid IV(A) from (3R)-3-hydroxytetradecanoyl-[acyl-carrier-protein] and UDP-N-acetyl-alpha-D-glucosamine: step 6/6. Its function is as follows. Transfers the gamma-phosphate of ATP to the 4'-position of a tetraacyldisaccharide 1-phosphate intermediate (termed DS-1-P) to form tetraacyldisaccharide 1,4'-bis-phosphate (lipid IVA). The sequence is that of Tetraacyldisaccharide 4'-kinase from Neisseria meningitidis serogroup C / serotype 2a (strain ATCC 700532 / DSM 15464 / FAM18).